Here is a 319-residue protein sequence, read N- to C-terminus: Pre T-cell antigen receptor alpha (319 aa).

Residues 1-16 (MAESWLLLLLALGCPA) form the signal peptide. The Extracellular segment spans residues 17–160 (LPTEVTTLLR…LRGTRALVLR (144 aa)). Residues Cys-58 and Cys-118 are joined by a disulfide bond. Residue Asn-78 is glycosylated (N-linked (GlcNAc...) asparagine). A helical membrane pass occupies residues 161-181 (LGALRLLLFKLLLLDVLLTCG). The Cytoplasmic segment spans residues 182-319 (RLHAPPAARG…PPADPSFPGG (138 aa)). Low complexity predominate over residues 189-207 (ARGDPAGASGPGAPSLPAP). Positions 189–293 (ARGDPAGASG…VLRAWSSGPS (105 aa)) are disordered. The segment covering 260–271 (RRRRVHTRRPRR) has biased composition (basic residues).

As to quaternary structure, heterodimer with TCRB; disulfide linked. This heterodimer assembles with CD3 proteins into a signaling-competent pre-T-cell receptor complex. Interacts with RHBDD1.

The protein localises to the membrane. The protein resides in the cell membrane. Its function is as follows. Component of the pre-T-cell receptor complex (composed of PTCRA, TCRB and the CD3 complex) that has a crucial role in early T-cell development, particularly alpha-beta T cell differentiation. The polypeptide is Pre T-cell antigen receptor alpha (PTCRA) (Bos taurus (Bovine)).